The following is a 404-amino-acid chain: Probable tRNA sulfurtransferase (404 aa).

The 106-residue stretch at 60 to 165 folds into the THUMP domain; that stretch reads QPIVEALKLV…DEAAYISYEE (106 aa). ATP-binding positions include 183 to 184, 208 to 209, Arg265, Gly287, and Gln296; these read ML and HF.

This sequence belongs to the ThiI family.

It is found in the cytoplasm. The enzyme catalyses [ThiI sulfur-carrier protein]-S-sulfanyl-L-cysteine + a uridine in tRNA + 2 reduced [2Fe-2S]-[ferredoxin] + ATP + H(+) = [ThiI sulfur-carrier protein]-L-cysteine + a 4-thiouridine in tRNA + 2 oxidized [2Fe-2S]-[ferredoxin] + AMP + diphosphate. It catalyses the reaction [ThiS sulfur-carrier protein]-C-terminal Gly-Gly-AMP + S-sulfanyl-L-cysteinyl-[cysteine desulfurase] + AH2 = [ThiS sulfur-carrier protein]-C-terminal-Gly-aminoethanethioate + L-cysteinyl-[cysteine desulfurase] + A + AMP + 2 H(+). It functions in the pathway cofactor biosynthesis; thiamine diphosphate biosynthesis. In terms of biological role, catalyzes the ATP-dependent transfer of a sulfur to tRNA to produce 4-thiouridine in position 8 of tRNAs, which functions as a near-UV photosensor. Also catalyzes the transfer of sulfur to the sulfur carrier protein ThiS, forming ThiS-thiocarboxylate. This is a step in the synthesis of thiazole, in the thiamine biosynthesis pathway. The sulfur is donated as persulfide by IscS. This is Probable tRNA sulfurtransferase from Streptococcus pyogenes serotype M49 (strain NZ131).